A 454-amino-acid polypeptide reads, in one-letter code: DNA-binding protein (454 aa).

Residues 1 to 41 form a disordered region; that stretch reads MSHKKVVAISESSSDEEVPVAPPTAPPKKRQRKAVEEPRGH. Tyr129 is subject to Phosphotyrosine; by host. 2 residues coordinate Zn(2+): Cys213 and His215. Residues 226 to 260 are flexible loop; the sequence is VEMDVNSENAQRALKENPEKTKIVSNRWGRNVVQF. Zn(2+) is bound by residues Cys268, Cys284, Cys325, Cys327, Cys378, and Cys394. The interval 440-454 is C-terminal arm, DBP binding; sequence TILPQGQHDDDLVLF.

This sequence belongs to the adenoviridae E2A DNA-binding protein family. In terms of assembly, homomultimerizes on viral ssDNA bound to pTP. Forms a initiation complex with viral polymerase, pTP and hosts NFIA and POU2F1/OCT1. Interacts with host SRCAP.

The protein localises to the host nucleus. In terms of biological role, plays a role in the elongation phase of viral strand displacement replication by unwinding the template in an ATP-independent fashion, employing its capacity to form multimers. Also enhances the rate of initiation. Released from template upon second strand synthesis. Assembles in complex with viral pTP, viral pol, host NFIA and host POU2F1/OCT1 on viral origin of replication. Covers the whole ssDNA genome during synthesis. The complementary strand synthesis induces its relese from DNA template. May inhibit cellular transcription mediated by the interaction between host SRCAP and CBP. The protein is DNA-binding protein of Canine adenovirus serotype 1 (strain RI261) (CAdV-1).